A 289-amino-acid polypeptide reads, in one-letter code: Diaminopimelate epimerase (289 aa).

Substrate-binding residues include N13, Q47, and N67. The active-site Proton donor is C76. Substrate is bound by residues 77–78 (GN), N167, N200, and 218–219 (ER). C227 serves as the catalytic Proton acceptor. A substrate-binding site is contributed by 228–229 (GT).

This sequence belongs to the diaminopimelate epimerase family. Homodimer.

It is found in the cytoplasm. The enzyme catalyses (2S,6S)-2,6-diaminopimelate = meso-2,6-diaminopimelate. It participates in amino-acid biosynthesis; L-lysine biosynthesis via DAP pathway; DL-2,6-diaminopimelate from LL-2,6-diaminopimelate: step 1/1. In terms of biological role, catalyzes the stereoinversion of LL-2,6-diaminopimelate (L,L-DAP) to meso-diaminopimelate (meso-DAP), a precursor of L-lysine and an essential component of the bacterial peptidoglycan. The sequence is that of Diaminopimelate epimerase from Burkholderia pseudomallei (strain 668).